A 178-amino-acid chain; its full sequence is Thymidine kinase (178 aa).

Residue 13-20 (GPMFAGKS) coordinates ATP. Glu85 acts as the Proton acceptor in catalysis. Phe115 lines the substrate pocket. Positions 140 and 143 each coordinate Zn(2+). Residue 159–163 (IEIIG) coordinates substrate. Zn(2+) contacts are provided by Cys172 and Cys175.

It belongs to the thymidine kinase family.

The catalysed reaction is thymidine + ATP = dTMP + ADP + H(+). The sequence is that of Thymidine kinase (TK) from Myxoma virus (strain Uriarra) (MYXV).